A 448-amino-acid chain; its full sequence is uncharacterized protein (448 aa).

The 152-residue stretch at 4–155 (QAIVLATFDA…SAVNLEFDSL (152 aa)) folds into the uDENN domain. Residues 183–326 (LDHLGPAFYC…FKGLSRYLSF (144 aa)) form the cDENN domain. The dDENN domain occupies 328 to 428 (GESSWGLTTY…WQYGKYFWLR (101 aa)). A helical transmembrane segment spans residues 425–447 (FWLRRVSLIFLASTCFLFILWKL).

Its subcellular location is the golgi apparatus membrane. It localises to the endoplasmic reticulum membrane. This is an uncharacterized protein from Schizosaccharomyces pombe (strain 972 / ATCC 24843) (Fission yeast).